The primary structure comprises 190 residues: Ribosome maturation factor RimM (190 aa).

The PRC barrel domain occupies 95 to 177 (EDDEFFYTDL…AGLIDSPDDL (83 aa)). The disordered stretch occupies residues 170 to 190 (LIDSPDDLTGKPPKPPGKTKE). Residues 181–190 (PPKPPGKTKE) are compositionally biased toward pro residues.

It belongs to the RimM family. In terms of assembly, binds ribosomal protein uS19.

The protein resides in the cytoplasm. Its function is as follows. An accessory protein needed during the final step in the assembly of 30S ribosomal subunit, possibly for assembly of the head region. Essential for efficient processing of 16S rRNA. May be needed both before and after RbfA during the maturation of 16S rRNA. It has affinity for free ribosomal 30S subunits but not for 70S ribosomes. This chain is Ribosome maturation factor RimM, found in Rhizobium rhizogenes (strain K84 / ATCC BAA-868) (Agrobacterium radiobacter).